Consider the following 340-residue polypeptide: DNA-directed RNA polymerase subunit alpha (340 aa).

Positions 1–237 are alpha N-terminal domain (alpha-NTD); it reads MSSDELVYMN…EQMNPFINFD (237 aa). An alpha C-terminal domain (alpha-CTD) region spans residues 256–340; the sequence is FNENLYRSVD…PEEDQIKEGE (85 aa).

It belongs to the RNA polymerase alpha chain family. As to quaternary structure, homodimer. The RNAP catalytic core consists of 2 alpha, 1 beta, 1 beta' and 1 omega subunit. When a sigma factor is associated with the core the holoenzyme is formed, which can initiate transcription.

The catalysed reaction is RNA(n) + a ribonucleoside 5'-triphosphate = RNA(n+1) + diphosphate. Functionally, DNA-dependent RNA polymerase catalyzes the transcription of DNA into RNA using the four ribonucleoside triphosphates as substrates. The sequence is that of DNA-directed RNA polymerase subunit alpha from Desulforapulum autotrophicum (strain ATCC 43914 / DSM 3382 / VKM B-1955 / HRM2) (Desulfobacterium autotrophicum).